A 506-amino-acid polypeptide reads, in one-letter code: Cytochrome P450 52B1 (506 aa).

Heme is bound at residue Cys451.

Belongs to the cytochrome P450 family. It depends on heme as a cofactor.

Functionally, together with an NADPH cytochrome P450 the enzyme system catalyzes the terminal hydroxylation as the first step in the assimilation of alkanes and fatty acids. The polypeptide is Cytochrome P450 52B1 (CYP52B1) (Candida tropicalis (Yeast)).